Reading from the N-terminus, the 607-residue chain is Actin-related protein 5 (607 aa).

A Glycyl lysine isopeptide (Lys-Gly) (interchain with G-Cter in SUMO2) cross-link involves residue lysine 283. Coiled-coil stretches lie at residues 288–327 (TLTSEEKQERRQQQLRRLQELNARRREEKLQLDQERLDRL) and 355–384 (EELQSYIQKLSIAVEQAKQKILQAEVNLEV). The span at 584–596 (SRSSDAQASSKGS) shows a compositional bias: low complexity. The disordered stretch occupies residues 584-607 (SRSSDAQASSKGSAAGGGGAGEQA). A compositionally biased stretch (gly residues) spans 597–607 (AAGGGGAGEQA).

The protein belongs to the actin family. ARP5 subfamily. In terms of assembly, component of the chromatin remodeling INO80 complex; specifically part of a complex module associated with the helicase ATP-binding and the helicase C-terminal domain of INO80. Interacts with DDB1. Interacts with ACTR8; the interaction is observed in asynchronous (interphase) cells but not in metaphase-arrested cells indicative for a possible dissociation of the INO80 complex in mitotic cells.

It localises to the nucleus. It is found in the cytoplasm. Its function is as follows. Proposed core component of the chromatin remodeling INO80 complex which is involved in transcriptional regulation, DNA replication and probably DNA repair. Involved in DNA double-strand break repair and UV-damage excision repair. This Homo sapiens (Human) protein is Actin-related protein 5 (ACTR5).